The chain runs to 347 residues: Extracellular exo-alpha-(1-&gt;5)-L-arabinofuranosidase ArbA (347 aa).

The signal sequence occupies residues 1 to 31 (MPTHHPITRQHWHHSWLSALALLCASLACGA). Asp-35 contributes to the substrate binding site. Catalysis depends on Asp-38, which acts as the Proton acceptor. Substrate contacts are provided by residues 90–92 (DGH), 115–116 (GK), Asn-155, Ser-175, and Glu-221. The active-site Proton donor is Glu-221. Residue His-291 participates in Ca(2+) binding. Gln-316 serves as a coordination point for substrate.

This sequence belongs to the glycosyl hydrolase 43 family. As to quaternary structure, homodimer.

The protein localises to the secreted. It carries out the reaction Hydrolysis of terminal non-reducing alpha-L-arabinofuranoside residues in alpha-L-arabinosides.. The protein operates within glycan metabolism; L-arabinan degradation. Involved in the degradation of arabinan and is a key enzyme in the complete degradation of the plant cell wall. Catalyzes the cleavage of the terminal alpha-(1-&gt;5)-arabinofuranosyl bonds of linear arabinan and carboxymethylarabinan to produce almost exclusively arabinotriose. This is Extracellular exo-alpha-(1-&gt;5)-L-arabinofuranosidase ArbA (arbA) from Cellvibrio japonicus (strain Ueda107) (Pseudomonas fluorescens subsp. cellulosa).